The chain runs to 473 residues: Vasculin (473 aa).

5 disordered regions span residues 1–26 (MAQHDFAPAWLNFPTPPSSTKSSLNF), 44–163 (RRRH…EYPP), 196–240 (SQPV…SFPH), 258–286 (NFSPSTTSVKECNRSNSSSPVDKLNQQPR), and 305–342 (LKRDRVEEEHEDESHVGSEKDDDSFNLHNSNSTHQERD). Phosphoserine is present on Ser49. The residue at position 87 (Arg87) is an Omega-N-methylarginine. The segment covering 93 to 107 (GSSRSRSSIFHSGKS) has biased composition (low complexity). The span at 119-133 (ETGRKDDKRERKQFE) shows a compositional bias: basic and acidic residues. 4 positions are modified to phosphoserine: Ser274, Ser276, Ser322, and Ser381. Positions 305 to 329 (LKRDRVEEEHEDESHVGSEKDDDSF) are enriched in basic and acidic residues. A disordered region spans residues 444 to 473 (GPWKNSTFKPTIENDDTETSSSDTSDDDDV). A compositionally biased stretch (acidic residues) spans 456–473 (ENDDTETSSSDTSDDDDV).

The protein belongs to the vasculin family. As to quaternary structure, interacts with GTF2B, GTF2F2, RNA polymerase II and TBP.

It is found in the nucleus. Functions as a GC-rich promoter-specific transactivating transcription factor. The sequence is that of Vasculin (GPBP1) from Bos taurus (Bovine).